The chain runs to 686 residues: METMIKSYIKKGKDAVLNTPEIERKVRDATSNDKWGPSGTQMQEISRASYNYECFPIIMGVIWKRINDPGKFWRHVYKSLLLIDYLVRNGSPQVIRDCRHHTMEIKTLVEFQYIEEEKDVGLSVRERAKQVIDLLQDDQRIKEERDKAKTNQNKYVGIGNDSRDFGYGGGSYGGGGYDSDSYGSNQRDSYGGNQRDSYGGNQRDSYGGNQRETTRRDSFNGRDEGYGNNNNNNNNNSYDSDPYSNTRAEYENYSNRAETRRNNEFGDDSNNSYNNNNNFNNNNNNNNSYNNSNNSNNSNNNNNNNNYNNSNNNSNNIQNNPNAASGGRSRPRAASGSGPSPATPNFQSSQQQQQPTLIDFSEPTPANKPMVFDPLADLASGMNNTNNNNNNNNNNSNSFGGFQSVNNNQNSFNFNNNNQQQQQQNNFLQLTQSNPQQSNNNNNNNNFFNQQPQQAQQFGQFQNSSMNKDPFAKDEFGDFAGANGNADFNPFDQQSGDFSNKNDGQQKPKDTNDPWSKKDLFDLSNLGNQNPNQSPVNNTNNNNNGNTRSQPARVANGPITSAGSTIPTMRPQPMMNQGFNGGMMNQGMGGFNQGGGMNNMNGMNQGGMNNMNGMNQGGMNQGGMGGFNQGGMNNMGGMNQGGMNNMGGMNNMGGMNSMNGMNQGGMGFNQSGANRNTNSMGSAGRF.

Residues 14–145 (DAVLNTPEIE…QDDQRIKEER (132 aa)) enclose the ENTH domain. Disordered stretches follow at residues 177 to 417 (YDSD…FNNN) and 463 to 571 (NSSM…TMRP). Residues 185 to 211 (NQRDSYGGNQRDSYGGNQRDSYGGNQR) show a composition bias toward polar residues. Residues 212–225 (ETTRRDSFNGRDEG) are compositionally biased toward basic and acidic residues. Residues 237–256 (SYDSDPYSNTRAEYENYSNR) are compositionally biased toward polar residues. Low complexity-rich tracts occupy residues 269–340 (SNNS…SGPS) and 383–417 (NNTNNNNNNNNNNSNSFGGFQSVNNNQNSFNFNNN). Residues 491–503 (FDQQSGDFSNKND) show a composition bias toward polar residues. A compositionally biased stretch (basic and acidic residues) spans 504–521 (GQQKPKDTNDPWSKKDLF). A compositionally biased stretch (low complexity) spans 527 to 547 (GNQNPNQSPVNNTNNNNNGNT). Residues 558-567 (PITSAGSTIP) are compositionally biased toward polar residues.

It belongs to the epsin family.

The protein resides in the membrane. It is found in the clathrin-coated pit. Binds to membranes enriched in phosphatidylinositol 4,5-bisphosphate (PtdIns(4,5)P2). This Dictyostelium discoideum (Social amoeba) protein is Epsin (epnA).